We begin with the raw amino-acid sequence, 379 residues long: UDP-4-amino-4-deoxy-L-arabinose--oxoglutarate aminotransferase (379 aa).

K182 carries the post-translational modification N6-(pyridoxal phosphate)lysine.

Belongs to the DegT/DnrJ/EryC1 family. ArnB subfamily. As to quaternary structure, homodimer. The cofactor is pyridoxal 5'-phosphate.

The enzyme catalyses UDP-4-amino-4-deoxy-beta-L-arabinose + 2-oxoglutarate = UDP-beta-L-threo-pentopyranos-4-ulose + L-glutamate. It functions in the pathway nucleotide-sugar biosynthesis; UDP-4-deoxy-4-formamido-beta-L-arabinose biosynthesis; UDP-4-deoxy-4-formamido-beta-L-arabinose from UDP-alpha-D-glucuronate: step 2/3. Its pathway is bacterial outer membrane biogenesis; lipopolysaccharide biosynthesis. Catalyzes the conversion of UDP-4-keto-arabinose (UDP-Ara4O) to UDP-4-amino-4-deoxy-L-arabinose (UDP-L-Ara4N). The modified arabinose is attached to lipid A and is required for resistance to polymyxin and cationic antimicrobial peptides. The polypeptide is UDP-4-amino-4-deoxy-L-arabinose--oxoglutarate aminotransferase (Shigella flexneri).